Here is a 246-residue protein sequence, read N- to C-terminus: NAD(P)H-quinone oxidoreductase subunit K, organellar chromatophore (246 aa).

The [4Fe-4S] cluster site is built by C58, C59, C123, and C154.

The protein belongs to the complex I 20 kDa subunit family. As to quaternary structure, NDH-1 is composed of 14 different subunits. Subunits nuoB, C, D, E, F, and G constitute the peripheral sector of the complex. [4Fe-4S] cluster serves as cofactor.

The protein localises to the plastid. It is found in the organellar chromatophore thylakoid membrane. The catalysed reaction is a quinone + NADH + H(+) = a quinol + NAD(+). NDH-1 shuttles electrons from NADH, via FMN and iron-sulfur (Fe-S) centers, to quinones in the respiratory chain. Couples the redox reaction to proton translocation (for every two electrons transferred, four hydrogen ions are translocated across the cytoplasmic membrane), and thus conserves the redox energy in a proton gradient. In Paulinella chromatophora, this protein is NAD(P)H-quinone oxidoreductase subunit K, organellar chromatophore.